A 784-amino-acid polypeptide reads, in one-letter code: N-alpha-acetyltransferase 35, NatC auxiliary subunit homolog (784 aa).

3 disordered regions span residues 1-23 (MYPSTLPAEADPSTMNGSSVAEP), 320-353 (NTLDRGTQPEKGSDAPNPMGFSPRIHDRSQPPAF), and 606-630 (SKTQSGGSGAAKNRKAAKPKKNKKT). Residues 617–630 (KNRKAAKPKKNKKT) are compositionally biased toward basic residues.

Belongs to the MAK10 family. Component of the N-terminal acetyltransferase C (NatC) complex, which is composed of Naa35, Sbat/Naa38 and Naa30A.

It is found in the cytoplasm. Auxillary component of the N-terminal acetyltransferase C (NatC) complex which catalyzes acetylation of N-terminal methionine residues. The chain is N-alpha-acetyltransferase 35, NatC auxiliary subunit homolog from Drosophila melanogaster (Fruit fly).